The primary structure comprises 81 residues: Photosystem I iron-sulfur center (81 aa).

4Fe-4S ferredoxin-type domains are found at residues 2–31 and 37–68; these read SHAVKIYDTCIGCTQCVRACPLDVLEMVPW and GQIASSPRTEDCVGCKRCETACPTDFLSIRVY. Residues Cys-11, Cys-14, Cys-17, Cys-21, Cys-48, Cys-51, Cys-54, and Cys-58 each coordinate [4Fe-4S] cluster.

In terms of assembly, the cyanobacterial PSI reaction center is composed of one copy each of PsaA,B,C,D,E,F,I,J,K,L,M and X, and forms trimeric complexes. Requires [4Fe-4S] cluster as cofactor.

The protein localises to the cellular thylakoid membrane. The catalysed reaction is reduced [plastocyanin] + hnu + oxidized [2Fe-2S]-[ferredoxin] = oxidized [plastocyanin] + reduced [2Fe-2S]-[ferredoxin]. Its function is as follows. Apoprotein for the two 4Fe-4S centers FA and FB of photosystem I (PSI); essential for photochemical activity. FB is the terminal electron acceptor of PSI, donating electrons to ferredoxin. The C-terminus interacts with PsaA/B/D and helps assemble the protein into the PSI complex. Required for binding of PsaD and PsaE to PSI. PSI is a plastocyanin/cytochrome c6-ferredoxin oxidoreductase, converting photonic excitation into a charge separation, which transfers an electron from the donor P700 chlorophyll pair to the spectroscopically characterized acceptors A0, A1, FX, FA and FB in turn. In Synechococcus sp. (strain WH7803), this protein is Photosystem I iron-sulfur center.